The following is a 344-amino-acid chain: Holliday junction branch migration complex subunit RuvB (344 aa).

The tract at residues 1–182 (MRIELLNTPP…FGINSRFDYY (182 aa)) is large ATPase domain (RuvB-L). ATP contacts are provided by residues isoleucine 21, arginine 22, glycine 63, lysine 66, threonine 67, threonine 68, 129-131 (EDF), arginine 172, tyrosine 182, and arginine 219. Threonine 67 contacts Mg(2+). The segment at 183-253 (APELLEGIIR…IAMKTLDCLE (71 aa)) is small ATPAse domain (RuvB-S). The segment at 256 to 344 (EEGLDDMDKK…ISLFDAQPTS (89 aa)) is head domain (RuvB-H). Arginine 311 and arginine 316 together coordinate DNA.

The protein belongs to the RuvB family. As to quaternary structure, homohexamer. Forms an RuvA(8)-RuvB(12)-Holliday junction (HJ) complex. HJ DNA is sandwiched between 2 RuvA tetramers; dsDNA enters through RuvA and exits via RuvB. An RuvB hexamer assembles on each DNA strand where it exits the tetramer. Each RuvB hexamer is contacted by two RuvA subunits (via domain III) on 2 adjacent RuvB subunits; this complex drives branch migration. In the full resolvosome a probable DNA-RuvA(4)-RuvB(12)-RuvC(2) complex forms which resolves the HJ.

It is found in the cytoplasm. It catalyses the reaction ATP + H2O = ADP + phosphate + H(+). The RuvA-RuvB-RuvC complex processes Holliday junction (HJ) DNA during genetic recombination and DNA repair, while the RuvA-RuvB complex plays an important role in the rescue of blocked DNA replication forks via replication fork reversal (RFR). RuvA specifically binds to HJ cruciform DNA, conferring on it an open structure. The RuvB hexamer acts as an ATP-dependent pump, pulling dsDNA into and through the RuvAB complex. RuvB forms 2 homohexamers on either side of HJ DNA bound by 1 or 2 RuvA tetramers; 4 subunits per hexamer contact DNA at a time. Coordinated motions by a converter formed by DNA-disengaged RuvB subunits stimulates ATP hydrolysis and nucleotide exchange. Immobilization of the converter enables RuvB to convert the ATP-contained energy into a lever motion, pulling 2 nucleotides of DNA out of the RuvA tetramer per ATP hydrolyzed, thus driving DNA branch migration. The RuvB motors rotate together with the DNA substrate, which together with the progressing nucleotide cycle form the mechanistic basis for DNA recombination by continuous HJ branch migration. Branch migration allows RuvC to scan DNA until it finds its consensus sequence, where it cleaves and resolves cruciform DNA. This is Holliday junction branch migration complex subunit RuvB from Pelodictyon phaeoclathratiforme (strain DSM 5477 / BU-1).